Consider the following 398-residue polypeptide: Pentalenolactone synthase (398 aa).

Residue cysteine 347 participates in heme binding.

This sequence belongs to the cytochrome P450 family. Heme is required as a cofactor.

It carries out the reaction pentalenolactone F + 2 reduced [2Fe-2S]-[ferredoxin] + O2 + 2 H(+) = pentalenolactone + 2 oxidized [2Fe-2S]-[ferredoxin] + 2 H2O. Its pathway is antibiotic biosynthesis; pentalenolactone biosynthesis. Its function is as follows. Catalyzes the final step in the biosynthesis of the sesquiterpenoid antibiotic pentalenolactone by mediating the oxidative rearrangement of pentalenolactone F to pentalenolactone. This chain is Pentalenolactone synthase (penM), found in Streptomyces exfoliatus (Streptomyces hydrogenans).